Here is a 367-residue protein sequence, read N- to C-terminus: tRNA-specific 2-thiouridylase MnmA (367 aa).

ATP-binding positions include Gly13–Ser20 and Met39. Positions Asn99 to Asp101 are interaction with target base in tRNA. Cys104 acts as the Nucleophile in catalysis. A disulfide bridge links Cys104 with Cys200. An ATP-binding site is contributed by Gly128. The interval Lys150–Gln152 is interaction with tRNA. Cys200 functions as the Cysteine persulfide intermediate in the catalytic mechanism. The interval Arg307–Tyr308 is interaction with tRNA.

This sequence belongs to the MnmA/TRMU family.

It localises to the cytoplasm. It catalyses the reaction S-sulfanyl-L-cysteinyl-[protein] + uridine(34) in tRNA + AH2 + ATP = 2-thiouridine(34) in tRNA + L-cysteinyl-[protein] + A + AMP + diphosphate + H(+). Functionally, catalyzes the 2-thiolation of uridine at the wobble position (U34) of tRNA, leading to the formation of s(2)U34. The sequence is that of tRNA-specific 2-thiouridylase MnmA from Neisseria meningitidis serogroup C / serotype 2a (strain ATCC 700532 / DSM 15464 / FAM18).